The chain runs to 374 residues: Putative glutamate--cysteine ligase 2 (374 aa).

This sequence belongs to the glutamate--cysteine ligase type 2 family. YbdK subfamily.

The enzyme catalyses L-cysteine + L-glutamate + ATP = gamma-L-glutamyl-L-cysteine + ADP + phosphate + H(+). ATP-dependent carboxylate-amine ligase which exhibits weak glutamate--cysteine ligase activity. In Leptothrix cholodnii (strain ATCC 51168 / LMG 8142 / SP-6) (Leptothrix discophora (strain SP-6)), this protein is Putative glutamate--cysteine ligase 2.